A 319-amino-acid polypeptide reads, in one-letter code: Protein quaking-B (319 aa).

Residues 87–153 enclose the KH domain; that stretch reads YVPVKEYPDF…WEHLNEDLHV (67 aa). The SH3-binding signature appears at 276 to 279; that stretch reads PQTP.

It belongs to the quaking family. As to quaternary structure, homodimer; does not require RNA to homodimerize.

The protein resides in the cytoplasm. The protein localises to the nucleus. Its function is as follows. RNA reader protein, which recognizes and binds specific RNAs, thereby regulating RNA metabolic processes, such as pre-mRNA splicing, circular RNA (circRNA) formation, mRNA export, mRNA stability and/or translation. Involved in various cellular processes, such as mRNA storage into stress granules, apoptosis, interferon response, glial cell fate and development. Binds to the 5'-NACUAAY-N(1,20)-UAAY-3' RNA core sequence. Acts as a mRNA modification reader that specifically recognizes and binds mRNA transcripts modified by internal N(7)-methylguanine (m7G). Promotes the formation of circular RNAs (circRNAs): acts by binding to sites flanking circRNA-forming exons. CircRNAs are produced by back-splicing circularization of pre-mRNAs. Required to protect and promote stability of mRNAs which promotes oligodendrocyte differentiation. Acts as an important regulator of muscle development: required during early skeletal myofibril formation by regulating the accumulation of the muscle-specific tropomyosin-3 (tpm3) transcripts. The polypeptide is Protein quaking-B (qki2) (Danio rerio (Zebrafish)).